A 320-amino-acid chain; its full sequence is Aristolochene synthase (320 aa).

Over residues 1–14 (MKKPNGTNGASSSL) the composition is skewed to polar residues. Positions 1–20 (MKKPNGTNGASSSLEPPPST) are disordered. Positions 90, 219, 223, and 227 each coordinate Mg(2+). (2E,6E)-farnesyl diphosphate-binding residues include Arg-314 and Tyr-315.

This sequence belongs to the terpene synthase family. Homodimer. Mg(2+) is required as a cofactor.

It catalyses the reaction (2E,6E)-farnesyl diphosphate = (+)-aristolochene + diphosphate. It functions in the pathway sesquiterpene biosynthesis; aristolochene biosynthesis; aristolochene from farnesyl diphosphate: step 1/1. Catalyzes the cyclization of trans,trans-farnesyl diphosphate (FPP) to the bicyclic sesquiterpene aristolochene. Produces germacrene A as an enzyme-bound intermediate that is not released by the enzyme, but is further cyclized to produce aristolochene. Aristolochene is the likely parent compound for a number of sesquiterpenoid toxins produced by filamentous fungi. The chain is Aristolochene synthase (Ari1) from Aspergillus terreus.